Reading from the N-terminus, the 148-residue chain is Probable TtuB-protein conjugate cleaving protease (148 aa).

In terms of domain architecture, MPN spans 22-148 (HGLVLYVPRG…EGQEVALVVL (127 aa)). Residue glutamate 47 is the Proton donor/acceptor of the active site. 3 residues coordinate Zn(2+): histidine 101, histidine 103, and aspartate 114. Positions 101 to 114 (HSHPKGPALPSPRD) match the JAMM motif motif.

The protein belongs to the peptidase M67B family. Zn(2+) is required as a cofactor.

Functionally, probable metalloprotease that cleaves the ubiquitin-like modifier protein TtuB from protein conjugates, hydrolyzing the isopeptide bond between a lysine residue of the target protein and the C-terminal glycine of the modifier protein. Does not seem to work for all the TtuB conjugates. In Thermus thermophilus (strain ATCC BAA-163 / DSM 7039 / HB27), this protein is Probable TtuB-protein conjugate cleaving protease.